Here is a 159-residue protein sequence, read N- to C-terminus: Oleosin Cor a 12 (159 aa).

Over residues 1–10 (MADRPQQLQV) the composition is skewed to polar residues. A disordered region spans residues 1–24 (MADRPQQLQVHPQRGHGHYEGGIK). 3 consecutive transmembrane segments (helical) span residues 45–65 (VGGT…IGLL), 70–90 (LFII…LAVA), and 92–112 (FLSS…VLNY).

Belongs to the oleosin family. As to expression, expressed in seeds.

It is found in the lipid droplet. Its subcellular location is the membrane. Its function is as follows. May have a structural role to stabilize the lipid body during desiccation of the seed by preventing coalescence of the oil. Probably interacts with both lipid and phospholipid moieties of lipid bodies. May also provide recognition signals for specific lipase anchorage in lipolysis during seedling growth. The protein is Oleosin Cor a 12 of Corylus avellana (European hazel).